Here is a 437-residue protein sequence, read N- to C-terminus: Neomycin resistance protein (437 aa).

Disordered stretches follow at residues 161 to 285 (GQRG…EEEA) and 305 to 338 (VSGA…PVPD). The segment covering 203 to 229 (PPTGARSPGATAGARATASTSSSSVRS) has biased composition (low complexity). Residues 324–338 (RRRHRGRRHGRPVPD) show a composition bias toward basic residues.

It belongs to the Gram-positive plasmids replication protein type 1 family.

The protein is Neomycin resistance protein of Streptomyces cyanogenus.